The following is a 124-amino-acid chain: Small ribosomal subunit protein uS12 (124 aa).

A disordered region spans residues 8–28; sequence IRSAREKTDKKTKSPALKSCP. Residues 10 to 19 show a composition bias toward basic and acidic residues; sequence SAREKTDKKT. Residue Asp89 is modified to 3-methylthioaspartic acid.

Belongs to the universal ribosomal protein uS12 family. In terms of assembly, part of the 30S ribosomal subunit. Contacts proteins S8 and S17. May interact with IF1 in the 30S initiation complex.

Functionally, with S4 and S5 plays an important role in translational accuracy. Its function is as follows. Interacts with and stabilizes bases of the 16S rRNA that are involved in tRNA selection in the A site and with the mRNA backbone. Located at the interface of the 30S and 50S subunits, it traverses the body of the 30S subunit contacting proteins on the other side and probably holding the rRNA structure together. The combined cluster of proteins S8, S12 and S17 appears to hold together the shoulder and platform of the 30S subunit. This is Small ribosomal subunit protein uS12 from Arthrospira platensis (Spirulina platensis).